A 336-amino-acid polypeptide reads, in one-letter code: DNA-directed RNA polymerase subunit alpha (336 aa).

Residues 1–226 form an alpha N-terminal domain (alpha-NTD) region; sequence MLIAQRPTLS…ELFGLARELN (226 aa). The interval 241-336 is alpha C-terminal domain (alpha-CTD); that stretch reads AALAADMALP…DDAAFSDDEL (96 aa).

Belongs to the RNA polymerase alpha chain family. Homodimer. The RNAP catalytic core consists of 2 alpha, 1 beta, 1 beta' and 1 omega subunit. When a sigma factor is associated with the core the holoenzyme is formed, which can initiate transcription.

It catalyses the reaction RNA(n) + a ribonucleoside 5'-triphosphate = RNA(n+1) + diphosphate. Functionally, DNA-dependent RNA polymerase catalyzes the transcription of DNA into RNA using the four ribonucleoside triphosphates as substrates. This Arthrobacter sp. (strain FB24) protein is DNA-directed RNA polymerase subunit alpha.